Here is a 150-residue protein sequence, read N- to C-terminus: UPF0178 protein Sbal_1771 (150 aa).

It belongs to the UPF0178 family.

This is UPF0178 protein Sbal_1771 from Shewanella baltica (strain OS155 / ATCC BAA-1091).